A 191-amino-acid chain; its full sequence is Polysulfide reductase chain B (191 aa).

3 consecutive 4Fe-4S ferredoxin-type domains span residues 5–34 (YGMI…PDSV), 50–83 (GTLS…VNED), and 84–113 (GIVS…VDPV). [4Fe-4S] cluster-binding residues include Cys14, Cys17, Cys20, Cys24, Cys61, Cys64, Cys69, Cys73, Cys93, Cys96, Cys99, Cys103, Cys120, Cys123, Cys136, and Cys140.

Functional polysulfide reductase is made up of three different (A, B, and C) subunits.

Component of the phosphorylative electron transport system with polysulfide as the terminal acceptor. The sequence is that of Polysulfide reductase chain B (psrB) from Wolinella succinogenes (strain ATCC 29543 / DSM 1740 / CCUG 13145 / JCM 31913 / LMG 7466 / NCTC 11488 / FDC 602W) (Vibrio succinogenes).